The primary structure comprises 317 residues: Transaldolase (317 aa).

Residue K126 is the Schiff-base intermediate with substrate of the active site.

The protein belongs to the transaldolase family. Type 1 subfamily. In terms of assembly, homodimer.

The protein resides in the cytoplasm. The enzyme catalyses D-sedoheptulose 7-phosphate + D-glyceraldehyde 3-phosphate = D-erythrose 4-phosphate + beta-D-fructose 6-phosphate. It participates in carbohydrate degradation; pentose phosphate pathway; D-glyceraldehyde 3-phosphate and beta-D-fructose 6-phosphate from D-ribose 5-phosphate and D-xylulose 5-phosphate (non-oxidative stage): step 2/3. Its function is as follows. Transaldolase is important for the balance of metabolites in the pentose-phosphate pathway. The protein is Transaldolase of Burkholderia ambifaria (strain ATCC BAA-244 / DSM 16087 / CCUG 44356 / LMG 19182 / AMMD) (Burkholderia cepacia (strain AMMD)).